The following is a 276-amino-acid chain: uncharacterized protein (276 aa).

Residues 1 to 19 (MKKWLICSFVLVLLVSFTA) form the signal peptide. Cys-20 is lipidated: N-palmitoyl cysteine. A lipid anchor (S-diacylglycerol cysteine) is attached at Cys-20.

This sequence belongs to the NlpA lipoprotein family.

Its subcellular location is the cell membrane. This is an uncharacterized protein from Bacillus subtilis (strain 168).